The chain runs to 183 residues: Peptide deformylase (183 aa).

The Fe cation site is built by cysteine 110 and histidine 153. Glutamate 154 is an active-site residue. Fe cation is bound at residue histidine 157.

This sequence belongs to the polypeptide deformylase family. It depends on Fe(2+) as a cofactor.

It carries out the reaction N-terminal N-formyl-L-methionyl-[peptide] + H2O = N-terminal L-methionyl-[peptide] + formate. Its function is as follows. Removes the formyl group from the N-terminal Met of newly synthesized proteins. Requires at least a dipeptide for an efficient rate of reaction. N-terminal L-methionine is a prerequisite for activity but the enzyme has broad specificity at other positions. This Listeria monocytogenes serotype 4a (strain HCC23) protein is Peptide deformylase.